Consider the following 1083-residue polypeptide: Histone-lysine N-methyltransferase ATX2 (1083 aa).

The Nuclear localization signal signature appears at 77–84 (HRRPEIVH). The PWWP domain maps to 315 to 379 (PRDIIWAKLT…VKQAVSFLKG (65 aa)). The segment at 422 to 443 (TDCSERINSGEEDSSNSGDDYT) is disordered. The region spanning 457–516 (DCLHRIGDLQIINLGRIVTDSEFFKDSKHTWPEGYTATRKFISLKDPNASAMYKMEVLRD) is the FYR N-terminal domain. Residues 520–604 (KTRPVFRVTT…PPSKVSQRKY (85 aa)) form the FYR C-terminal domain. The PHD-type 1 zinc finger occupies 626–677 (LDKCNVCHMDEEYENNLFLQCDKCRMMVHTRCYGQLEPHNGILWLCNLCRPV). The C2HC pre-PHD-type zinc-finger motif lies at 682–715 (PPRCCLCPVVGGAMKPTTDGRWAHLACAIWIPET). The segment at 682–807 (PPRCCLCPVV…RLLSFCKRHR (126 aa)) is extended PHD domain (ePHD). The segment at 739–807 (LLCSICGVSY…RLLSFCKRHR (69 aa)) adopts a PHD-type 2 zinc-finger fold. The SET domain occupies 919–1037 (KRLAFGKSGI…KWEELTYDYR (119 aa)). H929 contacts S-adenosyl-L-methionine. O-linked (GlcNAc) serine glycosylation occurs at S968. Residues Y975 and 998-999 (NH) each bind S-adenosyl-L-methionine. C1001 provides a ligand contact to Zn(2+). S-adenosyl-L-methionine is bound at residue Y1036. One can recognise a Post-SET domain in the interval 1043 to 1059 (ERLACYCGFPRCRGVVN). Zn(2+)-binding residues include C1047, C1049, and C1054.

Belongs to the class V-like SAM-binding methyltransferase superfamily. Histone-lysine methyltransferase family. TRX/MLL subfamily. In terms of processing, activated via O-glycosylation. As to expression, expressed in roots, leaves and flowers and, to a lower extent, in young seedlings.

The protein localises to the nucleus. It catalyses the reaction N(6)-methyl-L-lysyl-[histone] + S-adenosyl-L-methionine = N(6),N(6)-dimethyl-L-lysyl-[histone] + S-adenosyl-L-homocysteine + H(+). Functionally, histone methyltransferase. Dimethylates 'Lys-4' of histone H3 (H3K4me2). H3 'Lys-4' methylation represents a specific tag for epigenetic transcriptional activation. Methylates only a limited fraction of nucleosomes of target genes (e.g. NAP and XTH33). Involved in epigenetic regulation of the floral repressor FLC and FT to prevent the transition from vegetative to reproductive development. The chain is Histone-lysine N-methyltransferase ATX2 from Arabidopsis thaliana (Mouse-ear cress).